The primary structure comprises 68 residues: Protein SlyX homolog (68 aa).

This sequence belongs to the SlyX family.

This Pseudomonas fluorescens (strain ATCC BAA-477 / NRRL B-23932 / Pf-5) protein is Protein SlyX homolog.